The following is a 498-amino-acid chain: Pup deamidase/depupylase (498 aa).

6 to 10 contacts ATP; that stretch reads GTEVE. Mg(2+) is bound by residues Glu-8 and Tyr-93. Asp-95 acts as the Proton acceptor in catalysis. Glu-100 is a Mg(2+) binding site. Residue 102–103 participates in ATP binding; that stretch reads SA. Residue His-156 participates in Mg(2+) binding. ATP contacts are provided by Asn-158 and Arg-240. His-242 is a binding site for Mg(2+).

It belongs to the Pup ligase/Pup deamidase family. Pup deamidase subfamily. The cofactor is ATP.

It catalyses the reaction [prokaryotic ubiquitin-like protein]-C-terminal-L-glutamine + H2O = [prokaryotic ubiquitin-like protein]-C-terminal-L-glutamate + NH4(+). The protein operates within protein degradation; proteasomal Pup-dependent pathway. Functionally, specifically catalyzes the deamidation of the C-terminal glutamine of the prokaryotic ubiquitin-like protein Pup to glutamate, thereby rendering Pup competent for conjugation. Probably also displays depupylase (DPUP) activity, removing conjugated Pup from target proteins; thus may be involved in the recycling of Pup and may function similarly to deubiquitinases (DUBs) in eukaryotes to prevent or promote proteasomal degradation of certain proteins. The chain is Pup deamidase/depupylase (dop) from Mycolicibacterium smegmatis (strain ATCC 700084 / mc(2)155) (Mycobacterium smegmatis).